Reading from the N-terminus, the 89-residue chain is Protein FAM25A (89 aa).

This sequence belongs to the FAM25 family.

This Homo sapiens (Human) protein is Protein FAM25A.